The primary structure comprises 37 residues: Cytochrome b6-f complex subunit 5 (37 aa).

Residues 5–25 traverse the membrane as a helical segment; it reads LLCGIVLGLVPVTIAGLFVTA.

It belongs to the PetG family. As to quaternary structure, the 4 large subunits of the cytochrome b6-f complex are cytochrome b6, subunit IV (17 kDa polypeptide, PetD), cytochrome f and the Rieske protein, while the 4 small subunits are PetG, PetL, PetM and PetN. The complex functions as a dimer.

The protein localises to the plastid. The protein resides in the chloroplast thylakoid membrane. Its function is as follows. Component of the cytochrome b6-f complex, which mediates electron transfer between photosystem II (PSII) and photosystem I (PSI), cyclic electron flow around PSI, and state transitions. PetG is required for either the stability or assembly of the cytochrome b6-f complex. The sequence is that of Cytochrome b6-f complex subunit 5 from Chlamydomonas reinhardtii (Chlamydomonas smithii).